The sequence spans 297 residues: Octopine catabolism/uptake operon regulatory protein OccR (297 aa).

The HTH lysR-type domain occupies Met-1–Thr-58. A DNA-binding region (H-T-H motif) is located at residues Met-18–Lys-37.

This sequence belongs to the LysR transcriptional regulatory family.

Functionally, positive regulatory protein for the occ operon involved in octopine catabolism and uptake. Also acts as a negative regulator of its expression. The chain is Octopine catabolism/uptake operon regulatory protein OccR (occR) from Rhizobium meliloti (Ensifer meliloti).